The following is a 173-amino-acid chain: Superoxide dismutase [Cu-Zn] (173 aa).

The first 22 residues, 1-22 (MNKAKTLLFTALAFGLSHQALA), serve as a signal peptide directing secretion. H67, H69, and H92 together coordinate Cu cation. The cysteines at positions 74 and 169 are disulfide-linked. 4 residues coordinate Zn(2+): H92, H101, H110, and D113. Cu cation is bound at residue H147.

The protein belongs to the Cu-Zn superoxide dismutase family. In terms of assembly, homodimer. Requires Cu cation as cofactor. Zn(2+) is required as a cofactor.

It localises to the periplasm. The catalysed reaction is 2 superoxide + 2 H(+) = H2O2 + O2. Functionally, destroys radicals which are normally produced within the cells and which are toxic to biological systems. The protein is Superoxide dismutase [Cu-Zn] (sodC) of Photobacterium leiognathi.